We begin with the raw amino-acid sequence, 274 residues long: Pantothenate synthetase (274 aa).

27-34 (MGALHQGH) serves as a coordination point for ATP. Histidine 34 serves as the catalytic Proton donor. (R)-pantoate is bound at residue glutamine 58. Residue glutamine 58 participates in beta-alanine binding. Position 144-147 (144-147 (GKKD)) interacts with ATP. (R)-pantoate is bound at residue glutamine 150. Residues isoleucine 173 and 181–184 (LSSR) each bind ATP.

This sequence belongs to the pantothenate synthetase family. As to quaternary structure, homodimer.

It localises to the cytoplasm. It catalyses the reaction (R)-pantoate + beta-alanine + ATP = (R)-pantothenate + AMP + diphosphate + H(+). The protein operates within cofactor biosynthesis; (R)-pantothenate biosynthesis; (R)-pantothenate from (R)-pantoate and beta-alanine: step 1/1. In terms of biological role, catalyzes the condensation of pantoate with beta-alanine in an ATP-dependent reaction via a pantoyl-adenylate intermediate. The chain is Pantothenate synthetase from Sulfurovum sp. (strain NBC37-1).